The primary structure comprises 573 residues: Proline--tRNA ligase (573 aa).

The protein belongs to the class-II aminoacyl-tRNA synthetase family. ProS type 1 subfamily. As to quaternary structure, homodimer.

It localises to the cytoplasm. The enzyme catalyses tRNA(Pro) + L-proline + ATP = L-prolyl-tRNA(Pro) + AMP + diphosphate. Functionally, catalyzes the attachment of proline to tRNA(Pro) in a two-step reaction: proline is first activated by ATP to form Pro-AMP and then transferred to the acceptor end of tRNA(Pro). As ProRS can inadvertently accommodate and process non-cognate amino acids such as alanine and cysteine, to avoid such errors it has two additional distinct editing activities against alanine. One activity is designated as 'pretransfer' editing and involves the tRNA(Pro)-independent hydrolysis of activated Ala-AMP. The other activity is designated 'posttransfer' editing and involves deacylation of mischarged Ala-tRNA(Pro). The misacylated Cys-tRNA(Pro) is not edited by ProRS. The sequence is that of Proline--tRNA ligase from Citrifermentans bemidjiense (strain ATCC BAA-1014 / DSM 16622 / JCM 12645 / Bem) (Geobacter bemidjiensis).